Consider the following 270-residue polypeptide: 3-methyl-2-oxobutanoate hydroxymethyltransferase (270 aa).

Mg(2+)-binding residues include D41 and D80. 3-methyl-2-oxobutanoate-binding positions include 41 to 42 (DS), D80, and K109. E111 serves as a coordination point for Mg(2+). The Proton acceptor role is filled by E178.

This sequence belongs to the PanB family. As to quaternary structure, homodecamer; pentamer of dimers. It depends on Mg(2+) as a cofactor.

It is found in the cytoplasm. It catalyses the reaction 3-methyl-2-oxobutanoate + (6R)-5,10-methylene-5,6,7,8-tetrahydrofolate + H2O = 2-dehydropantoate + (6S)-5,6,7,8-tetrahydrofolate. Its pathway is cofactor biosynthesis; (R)-pantothenate biosynthesis; (R)-pantoate from 3-methyl-2-oxobutanoate: step 1/2. In terms of biological role, catalyzes the reversible reaction in which hydroxymethyl group from 5,10-methylenetetrahydrofolate is transferred onto alpha-ketoisovalerate to form ketopantoate. The protein is 3-methyl-2-oxobutanoate hydroxymethyltransferase of Thermotoga sp. (strain RQ2).